The primary structure comprises 385 residues: Methionine aminopeptidase 1 (385 aa).

A C6H2-type zinc finger spans residues 6–59; it reads TRVCETAGCSSEAKLQCPTCLKLGIQGSYFCSQECFKGSWATHKLLHKKAKDEK. Positions 9, 14, 22, 25, 36, 40, 48, and 52 each coordinate Zn(2+). An a protein-binding site is contributed by H203. 3 residues coordinate Zn(2+): D220, D231, and H294. H301 serves as a coordination point for a protein. Positions 327 and 358 each coordinate Zn(2+).

Belongs to the peptidase M24A family. Methionine aminopeptidase type 1 subfamily. Associates with the 60S ribosomal subunit of the 80S translational complex. It depends on Zn(2+) as a cofactor. Requires Co(2+) as cofactor. Mn(2+) is required as a cofactor. Fe(2+) serves as cofactor.

Its subcellular location is the cytoplasm. It carries out the reaction Release of N-terminal amino acids, preferentially methionine, from peptides and arylamides.. Functionally, cotranslationally removes the N-terminal methionine from nascent proteins. The N-terminal methionine is often cleaved when the second residue in the primary sequence is small and uncharged (Met-Ala-, Cys, Gly, Pro, Ser, Thr, or Val). This is Methionine aminopeptidase 1 (METAP1) from Gallus gallus (Chicken).